The following is a 401-amino-acid chain: Chromate transport protein (401 aa).

The next 12 membrane-spanning stretches (helical) occupy residues leucine 26 to glycine 46, glycine 67 to glycine 87, isoleucine 93 to alanine 113, leucine 124 to isoleucine 144, valine 172 to tryptophan 192, alanine 214 to phenylalanine 234, alanine 237 to valine 257, valine 272 to alanine 294, alanine 299 to phenylalanine 321, isoleucine 330 to isoleucine 350, serine 356 to phenylalanine 376, and leucine 379 to leucine 399.

It belongs to the chromate ion transporter (CHR) (TC 2.A.51) family.

Its subcellular location is the cell inner membrane. In terms of biological role, this protein reduces chromate accumulation and is essential for chromate resistance. The protein is Chromate transport protein of Cupriavidus metallidurans (strain ATCC 43123 / DSM 2839 / NBRC 102507 / CH34) (Ralstonia metallidurans).